Reading from the N-terminus, the 1958-residue chain is Sodium channel protein type 10 subunit alpha (1958 aa).

Topologically, residues 1 to 125 are cytoplasmic; that stretch reads MEFPFGSVGT…FNLIRRTAIK (125 aa). The disordered stretch occupies residues 27 to 54; it reads QIAAHRAAKKGRPKQRGQKDKSEKPRPQ. Residues 32-42 are compositionally biased toward basic residues; it reads RAAKKGRPKQR. A compositionally biased stretch (basic and acidic residues) spans 43-54; it reads GQKDKSEKPRPQ. Residues 116-404 form an I repeat; it reads FNLIRRTAIK…VTMAYEEQSQ (289 aa). The chain crosses the membrane as a helical span at residues 126–149; that stretch reads VSVHSWFSIFITVTILVNCVCMTR. The Extracellular segment spans residues 150 to 154; that stretch reads TDLPE. A helical transmembrane segment spans residues 155-174; it reads KLEYAFTVVYTFEALIKILA. Residues 175–187 lie on the Cytoplasmic side of the membrane; the sequence is RGFCLNEFTYLRD. A helical membrane pass occupies residues 188-206; it reads PWNWLDFSVITLAYVGAAI. Residues 207-212 lie on the Extracellular side of the membrane; it reads DLRGIS. A helical; Voltage-sensor transmembrane segment spans residues 213–232; sequence GLRTFRVLRALKTVSVIPGL. The Cytoplasmic portion of the chain corresponds to 233–248; sequence KVIVGALIHSVRKLAD. The helical transmembrane segment at 249–272 threads the bilayer; sequence VTILTVFCLSVFALVGLQLFKGNL. Residues 273–340 are Extracellular-facing; that stretch reads KNKCIKNGTD…PDFNYTSFDS (68 aa). Cys-276 and Cys-318 are oxidised to a cystine. N-linked (GlcNAc...) asparagine glycans are attached at residues Asn-279, Asn-288, Asn-311, and Asn-334. The segment at residues 341–365 is an intramembrane region (pore-forming); the sequence is FAWAFLSLFRLMTQDSWERLYQQTL. The Extracellular portion of the chain corresponds to 366-372; it reads RASGKMY. A helical transmembrane segment spans residues 373 to 398; that stretch reads MVFFVLVIFLGSFYLVNLILAVVTMA. Residues 399 to 658 lie on the Cytoplasmic side of the membrane; the sequence is YEEQSQATIA…KWKKFKMVLF (260 aa). A phosphoserine mark is found at Ser-440, Ser-443, Ser-466, and Ser-478. Disordered stretches follow at residues 444–483 and 539–583; these read HNGSPLAPKNANERRPRVKSRMSEGSTDDNRSLQSDPYNQ and GRGA…APEG. The span at 549–560 shows a compositional bias: pro residues; the sequence is PRSPLPQSPNPG. A phosphoserine mark is found at Ser-611 and Ser-614. Residues 646–910 form an II repeat; sequence CCPKWKKFKM…EDDGEVNNLQ (265 aa). Residues 659–683 traverse the membrane as a helical segment; the sequence is ELVTDPFAELTITLCIVVNTVFMAM. Residues 684 to 694 lie on the Extracellular side of the membrane; sequence EHYPMTDAFDA. Residues 695-718 form a helical membrane-spanning segment; that stretch reads MLQAGNIVFTVFFTMEMAFKIIAF. Topologically, residues 719–726 are cytoplasmic; that stretch reads DPYYYFQK. The chain crosses the membrane as a helical span at residues 727-746; it reads KWNIFDCVIVTVSLLELSTS. The Extracellular segment spans residues 747-752; sequence KKGSLS. The helical; Voltage-sensor transmembrane segment at 753 to 772 threads the bilayer; the sequence is VLRTFRLLRVFKLAKSWPTL. The Cytoplasmic portion of the chain corresponds to 773–788; that stretch reads NMLIKIIGNSVGALGN. A helical transmembrane segment spans residues 789-809; that stretch reads LTFILAIIVFIFALVGKQLLS. Over 810 to 833 the chain is Extracellular; the sequence is ENYGCRRDGISVWNGERLRWHMCD. An intramembrane region (pore-forming) is located at residues 834–854; it reads FFHSFLVVFRILCGEWIENMW. At 855–863 the chain is on the extracellular side; the sequence is VCMEVSQDY. Cysteines 856 and 865 form a disulfide. Residues 864 to 889 traverse the membrane as a helical segment; the sequence is ICLTLFLTVMVLGNLVVLNLFIALLL. The Cytoplasmic segment spans residues 890 to 1148; it reads NSFSADNLTA…GWQVRKTCYR (259 aa). Residues 1006–1094 form a disordered region; sequence DLDELEEDVE…SEGSTVDCPD (89 aa). The segment covering 1017 to 1038 has biased composition (polar residues); it reads ASQSSWQEESPKGQQELLQQVQ. Residues 1141–1450 form an III repeat; the sequence is QVRKTCYRIV…KKYYNAMKKL (310 aa). Residues 1149–1172 form a helical membrane-spanning segment; it reads IVEHSWFESFIIFMILLSSGALAF. The Extracellular portion of the chain corresponds to 1173–1185; it reads EDNYLEEKPRVKS. A helical membrane pass occupies residues 1186 to 1211; sequence VLEYTDRVFTFIFVFEMLLKWVAYGF. Topologically, residues 1212 to 1217 are cytoplasmic; that stretch reads KKYFTN. Residues 1218–1239 form a helical membrane-spanning segment; sequence AWCWLDFLIVNISLTSLIAKIL. Topologically, residues 1240 to 1243 are extracellular; sequence EYSD. The helical; Voltage-sensor transmembrane segment at 1244–1265 threads the bilayer; that stretch reads VASIKALRTLRALRPLRALSRF. Topologically, residues 1266 to 1284 are cytoplasmic; the sequence is EGMRVVVDALVGAIPSIMN. A helical membrane pass occupies residues 1285 to 1312; it reads VLLVCLIFWLIFSIMGVNLFAGKFSRCV. Residues 1313-1354 are Extracellular-facing; it reads DTRSNPFSVVNSTFVTNKSDCYNQNNTGHFFWVNVKVNFDNV. Residues Asn-1323, Asn-1329, and Asn-1337 are each glycosylated (N-linked (GlcNAc...) asparagine). Residues 1355 to 1376 constitute an intramembrane region (pore-forming); sequence AMGYLALLQVATFKGWMDIMYA. The Extracellular portion of the chain corresponds to 1377 to 1392; the sequence is AVDSRDINSQPNWEES. Residues 1393 to 1419 form a helical membrane-spanning segment; it reads LYMYLYFVVFIIFGGFFTLNLFVGVII. Residues 1420–1472 lie on the Cytoplasmic side of the membrane; sequence DNFNQQKKKLGGQDIFMTEEQKKYYNAMKKLGSKKPQKPIPRPLNKYQGFVFD. Ser-1452 is modified (phosphoserine; by PKC). The IV repeat unit spans residues 1459-1758; that stretch reads IPRPLNKYQG…WEKFDPEATQ (300 aa). A helical membrane pass occupies residues 1473–1496; sequence IVTRQAFDIIIMALICLNMITMMV. Residues 1497–1507 are Extracellular-facing; it reads ETDNQSEEKTK. The N-linked (GlcNAc...) asparagine glycan is linked to Asn-1500. Residues 1508–1531 form a helical membrane-spanning segment; that stretch reads VLGRINQFFVAVFTGECVMKMFAL. Residues 1532–1537 lie on the Cytoplasmic side of the membrane; it reads RQYYFT. The chain crosses the membrane as a helical span at residues 1538–1561; the sequence is NGWNVFDFIVVILSISSLLFSAIL. Residues 1562–1573 are Extracellular-facing; sequence SSLESYFSPTLL. The chain crosses the membrane as a helical; Voltage-sensor span at residues 1574-1595; sequence RVIRLARIGRILRLIRAAKGIR. At 1596–1610 the chain is on the cytoplasmic side; that stretch reads TLLFALMMSLPALFN. A helical membrane pass occupies residues 1611–1633; sequence IGLLLFLVMFIYSIFGMASFANV. Residues 1634 to 1647 are Extracellular-facing; the sequence is IDEAGIDDMFNFKT. Residues 1648–1670 constitute an intramembrane region (pore-forming); that stretch reads FGNSMLCLFQITTSAGWDGLLSP. At 1671–1698 the chain is on the extracellular side; that stretch reads ILNTGPPYCDPNRPNSNGSKGNCGSPAV. Asn-1687 is a glycosylation site (N-linked (GlcNAc...) asparagine). Residues 1699 to 1723 traverse the membrane as a helical segment; it reads GILFFTTYIIISFLIVVNMYIAVIL. Topologically, residues 1724-1958 are cytoplasmic; that stretch reads ENFNVATEES…AKEGKSPGPQ (235 aa). An IQ domain is found at 1852–1881; it reads EDISATIIQKAYRNYMLQRSLMLSNPLHVP. A disordered region spans residues 1901–1958; sequence NDNGGLPDKSETASATSFPPSYDSVTRGLSDRANISTSSSMQNEDEVTAKEGKSPGPQ. Positions 1933–1942 are enriched in polar residues; sequence ANISTSSSMQ. Over residues 1947–1958 the composition is skewed to basic and acidic residues; that stretch reads VTAKEGKSPGPQ.

This sequence belongs to the sodium channel (TC 1.A.1.10) family. Nav1.8/SCN10A subfamily. As to quaternary structure, the channel consists of an ion conducting pore forming alpha-subunit regulated by one or more associated auxiliary subunits SCN1B, SCN2B and SCN3B; electrophysiological properties may vary depending on the type of the associated beta subunits. Found in a number of complexes with PRX, DYNLT1 and PDZD2. Interacts with proteins such as FSTL1, PRX, DYNLT1, PDZD2, S100A10 and many others. Interacts with NEDD4 and NEDD4L. Ubiquitinated by NEDD4L; which promotes its endocytosis. Post-translationally, phosphorylation at Ser-1452 by PKC in a highly conserved cytoplasmic loop slows inactivation of the sodium channel and reduces peak sodium currents. In terms of processing, lacks the cysteine which covalently binds the conotoxin GVIIJ. This cysteine (position 815) is speculated in other sodium channel subunits alpha to be implied in covalent binding with the sodium channel subunit beta-2 or beta-4. In terms of tissue distribution, expressed in dorsal root ganglion and trigeminal ganglion.

It is found in the cell membrane. It catalyses the reaction Na(+)(in) = Na(+)(out). Tetrodotoxin-resistant channel that mediates the voltage-dependent sodium ion permeability of excitable membranes. Assuming opened or closed conformations in response to the voltage difference across the membrane, the protein forms a sodium-selective channel through which sodium ions may pass in accordance with their electrochemical gradient. Plays a role in neuropathic pain mechanisms. The protein is Sodium channel protein type 10 subunit alpha of Mus musculus (Mouse).